We begin with the raw amino-acid sequence, 458 residues long: tRNA-2-methylthio-N(6)-dimethylallyladenosine synthase (458 aa).

In terms of domain architecture, MTTase N-terminal spans 15 to 134 (KKVFIKTYGC…LPDLLEQTKQ (120 aa)). Residues Cys-24, Cys-60, Cys-97, Cys-175, Cys-179, and Cys-182 each coordinate [4Fe-4S] cluster. In terms of domain architecture, Radical SAM core spans 161-393 (RKRGVSAFLT…QVLLLEQQNA (233 aa)). The region spanning 396 to 457 (RSKIGQTTDV…SNSFVGEMTN (62 aa)) is the TRAM domain.

The protein belongs to the methylthiotransferase family. MiaB subfamily. As to quaternary structure, monomer. Requires [4Fe-4S] cluster as cofactor.

The protein localises to the cytoplasm. The enzyme catalyses N(6)-dimethylallyladenosine(37) in tRNA + (sulfur carrier)-SH + AH2 + 2 S-adenosyl-L-methionine = 2-methylsulfanyl-N(6)-dimethylallyladenosine(37) in tRNA + (sulfur carrier)-H + 5'-deoxyadenosine + L-methionine + A + S-adenosyl-L-homocysteine + 2 H(+). In terms of biological role, catalyzes the methylthiolation of N6-(dimethylallyl)adenosine (i(6)A), leading to the formation of 2-methylthio-N6-(dimethylallyl)adenosine (ms(2)i(6)A) at position 37 in tRNAs that read codons beginning with uridine. The chain is tRNA-2-methylthio-N(6)-dimethylallyladenosine synthase from Bartonella henselae (strain ATCC 49882 / DSM 28221 / CCUG 30454 / Houston 1) (Rochalimaea henselae).